A 61-amino-acid polypeptide reads, in one-letter code: Small ribosomal subunit protein uS14 (61 aa).

Zn(2+) contacts are provided by Cys24, Cys27, Cys40, and Cys43.

This sequence belongs to the universal ribosomal protein uS14 family. Zinc-binding uS14 subfamily. Part of the 30S ribosomal subunit. Contacts proteins S3 and S10. Requires Zn(2+) as cofactor.

Binds 16S rRNA, required for the assembly of 30S particles and may also be responsible for determining the conformation of the 16S rRNA at the A site. The protein is Small ribosomal subunit protein uS14 of Mesoplasma florum (strain ATCC 33453 / NBRC 100688 / NCTC 11704 / L1) (Acholeplasma florum).